The sequence spans 206 residues: TPR repeat-containing protein YrrB (206 aa).

TPR repeat units follow at residues 1–23, 24–57, 59–91, 93–125, 127–159, and 160–193; these read MQEGDYEKAAEAFTKAIEENKED, AIPYINFANLLSSVNELERALAFYDKALELDSSA, TAYYGAGNVYVVKEMYKEAKDMFEKALRAGMEN, DLFYMLGTVLVKLEQPKLALPYLQRAVELNEND, EARFQFGMCLANEGMLDEALSQFAAVTEQDPGH, and ADAFYNAGVTYAYKENREKALEMLDKAIDIQPDH.

Monomer.

Could be an interacting mediator in the complex formation among RNA sulfuration components, RNA processing components, and aminoacyl-tRNA synthetases. This Bacillus subtilis (strain 168) protein is TPR repeat-containing protein YrrB (yrrB).